A 297-amino-acid chain; its full sequence is Ribosomal RNA small subunit methyltransferase H (297 aa).

Residues 37–39 (GGH), Asp-56, Phe-87, Asp-102, and His-109 each bind S-adenosyl-L-methionine.

The protein belongs to the methyltransferase superfamily. RsmH family.

Its subcellular location is the cytoplasm. The catalysed reaction is cytidine(1402) in 16S rRNA + S-adenosyl-L-methionine = N(4)-methylcytidine(1402) in 16S rRNA + S-adenosyl-L-homocysteine + H(+). Functionally, specifically methylates the N4 position of cytidine in position 1402 (C1402) of 16S rRNA. This is Ribosomal RNA small subunit methyltransferase H from Borrelia turicatae (strain 91E135).